Reading from the N-terminus, the 118-residue chain is uncharacterized protein (118 aa).

The segment covering 1–12 has biased composition (polar residues); sequence MADDNVSFTDQG. Positions 1 to 63 are disordered; that stretch reads MADDNVSFTD…KKGKTKKVRK (63 aa). Residues 39-63 show a composition bias toward basic residues; that stretch reads TKKKGKKNKKSKKKAKKGKTKKVRK. A helical transmembrane segment spans residues 81–101; the sequence is FCAGIIVAMIMLFVIIIYGII.

The protein localises to the membrane. This is an uncharacterized protein from Caenorhabditis elegans.